We begin with the raw amino-acid sequence, 268 residues long: Cytolethal distending toxin subunit A (268 aa).

The N-terminal stretch at 1 to 19 (MQKIIVFILCCFMTFFLYA) is a signal peptide. The N-palmitoyl cysteine moiety is linked to residue C20. The S-diacylglycerol cysteine moiety is linked to residue C20. The region spanning 112 to 252 (VSDFLTILGP…DNFDQQWFLT (141 aa)) is the Ricin B-type lectin domain. Residues 129 to 140 (WALAQGNWIWGY) form a mediates binding to target cells region.

In terms of assembly, heterotrimer of 3 subunits, CdtA, CdtB and CdtC.

It localises to the cell outer membrane. CDTs are cytotoxins which induce cell distension, growth arrest in G2/M phase, nucleus swelling, and chromatin fragmentation in HeLa cells. In Campylobacter jejuni subsp. jejuni serotype O:2 (strain ATCC 700819 / NCTC 11168), this protein is Cytolethal distending toxin subunit A (cdtA).